Reading from the N-terminus, the 173-residue chain is Protein FAM180A (173 aa).

An N-terminal signal peptide occupies residues 1-17 (MHWKMLLLLLLYYNAEA).

This sequence belongs to the FAM180 family.

Its subcellular location is the secreted. The chain is Protein FAM180A (FAM180A) from Homo sapiens (Human).